The primary structure comprises 203 residues: Cryptic neisserial protein 1 (203 aa).

A signal peptide spans 1 to 18 (MRRAILLILTLTVGTSLA).

It belongs to the Cnp family.

Its subcellular location is the periplasm. The protein localises to the cytoplasm. The polypeptide is Cryptic neisserial protein 1 (Neisseria gonorrhoeae (strain ATCC 700825 / FA 1090)).